Reading from the N-terminus, the 432-residue chain is RNA exonuclease 4 (432 aa).

Basic residues predominate over residues alanine 42–lysine 54. Positions alanine 42–serine 177 are disordered. Positions lysine 121–lysine 137 are enriched in basic and acidic residues. Serine 123 carries the phosphoserine modification. A Glycyl lysine isopeptide (Lys-Gly) (interchain with G-Cter in SUMO2) cross-link involves residue lysine 127. One can recognise an Exonuclease domain in the interval lysine 230–isoleucine 381.

The protein belongs to the REXO4 family. As to quaternary structure, can bind ESR1 and ESR2. This interaction is abrogated by estrogen and augmented by tamoxifen treatment.

Its subcellular location is the nucleus. The protein resides in the nucleolus. May function as an exonuclease. The protein is RNA exonuclease 4 (Rexo4) of Mus musculus (Mouse).